We begin with the raw amino-acid sequence, 685 residues long: DNA-directed RNA polymerase subunit beta' (685 aa).

C69, C71, C87, and C90 together coordinate Zn(2+). Mg(2+) contacts are provided by D492, D494, and D496.

This sequence belongs to the RNA polymerase beta' chain family. RpoC1 subfamily. In plastids the minimal PEP RNA polymerase catalytic core is composed of four subunits: alpha, beta, beta', and beta''. When a (nuclear-encoded) sigma factor is associated with the core the holoenzyme is formed, which can initiate transcription. Mg(2+) serves as cofactor. It depends on Zn(2+) as a cofactor.

It is found in the plastid. Its subcellular location is the chloroplast. The enzyme catalyses RNA(n) + a ribonucleoside 5'-triphosphate = RNA(n+1) + diphosphate. Its function is as follows. DNA-dependent RNA polymerase catalyzes the transcription of DNA into RNA using the four ribonucleoside triphosphates as substrates. The protein is DNA-directed RNA polymerase subunit beta' of Dioscorea elephantipes (Elephant's foot yam).